We begin with the raw amino-acid sequence, 411 residues long: MLTVLAALSLLSLLTSATGRLAPDELCYAEPRRTGSPPNTQPERPPVIFEPPTIAIKAESKGCELILLDPPIDVSYRREDKVNASIAWFFDFGACRMPIAYREYYGCIGNAVPSPETCDAYSFTLIRTEGIVEFTIVNMSLLFQPGIYDSGNFIYSVLLDYHIFTGRVTLEVEKDTNYPCGMIHGLTAYGNINVDETMDNASPHPRAVGCFPEPIDNEAWGNVTFTELGIPDPNSFLDDEGDYPNISDCHSWESYTYPNTLRQATGPQTLLVGAVGLRILAQAWKFVGDETYDTIRAEAKNLETHVPSSAAESSLENQSTQEESNSPEVAHLRSVNSDDSTHTGGASNGIQDCDSQLKTVYACLALIGLGTCAMIGLIVYICVLRSKLSSLEFWRAQNVKHRNYQRLEYVA.

A signal peptide spans 1–19 (MLTVLAALSLLSLLTSATG). N-linked (GlcNAc...) asparagine; by host glycans are attached at residues asparagine 83, asparagine 138, asparagine 222, asparagine 245, and asparagine 317. Composition is skewed to polar residues over residues 306–327 (VPSS…SNSP) and 334–345 (SVNSDDSTHTGG). The disordered stretch occupies residues 306-345 (VPSSAAESSLENQSTQEESNSPEVAHLRSVNSDDSTHTGG). A helical transmembrane segment spans residues 364–384 (LALIGLGTCAMIGLIVYICVL).

The protein belongs to the alphaherpesvirinae glycoprotein G family.

It localises to the virion membrane. Its function is as follows. Chemokine-binding protein that inhibits neutrophils' chemotaxis. The protein is Envelope glycoprotein G (gG) of Equine herpesvirus 1 (strain Kentucky A) (EHV-1).